We begin with the raw amino-acid sequence, 335 residues long: Holliday junction branch migration complex subunit RuvB (335 aa).

Residues 1–181 (MSERVISPEP…FGLLIRLNLY (181 aa)) form a large ATPase domain (RuvB-L) region. ATP-binding positions include L20, R21, G62, K65, T66, T67, 128–130 (EDF), R171, Y181, and R218. Residue T66 participates in Mg(2+) binding. A small ATPAse domain (RuvB-S) region spans residues 182 to 252 (SPEDLEKIVT…IAGAGLALLQ (71 aa)). Residues 255–335 (ELGLDDIDRR…KLNHSQKTLF (81 aa)) form a head domain (RuvB-H) region. DNA is bound by residues R310 and R315.

The protein belongs to the RuvB family. In terms of assembly, homohexamer. Forms an RuvA(8)-RuvB(12)-Holliday junction (HJ) complex. HJ DNA is sandwiched between 2 RuvA tetramers; dsDNA enters through RuvA and exits via RuvB. An RuvB hexamer assembles on each DNA strand where it exits the tetramer. Each RuvB hexamer is contacted by two RuvA subunits (via domain III) on 2 adjacent RuvB subunits; this complex drives branch migration. In the full resolvosome a probable DNA-RuvA(4)-RuvB(12)-RuvC(2) complex forms which resolves the HJ.

It localises to the cytoplasm. It carries out the reaction ATP + H2O = ADP + phosphate + H(+). Functionally, the RuvA-RuvB-RuvC complex processes Holliday junction (HJ) DNA during genetic recombination and DNA repair, while the RuvA-RuvB complex plays an important role in the rescue of blocked DNA replication forks via replication fork reversal (RFR). RuvA specifically binds to HJ cruciform DNA, conferring on it an open structure. The RuvB hexamer acts as an ATP-dependent pump, pulling dsDNA into and through the RuvAB complex. RuvB forms 2 homohexamers on either side of HJ DNA bound by 1 or 2 RuvA tetramers; 4 subunits per hexamer contact DNA at a time. Coordinated motions by a converter formed by DNA-disengaged RuvB subunits stimulates ATP hydrolysis and nucleotide exchange. Immobilization of the converter enables RuvB to convert the ATP-contained energy into a lever motion, pulling 2 nucleotides of DNA out of the RuvA tetramer per ATP hydrolyzed, thus driving DNA branch migration. The RuvB motors rotate together with the DNA substrate, which together with the progressing nucleotide cycle form the mechanistic basis for DNA recombination by continuous HJ branch migration. Branch migration allows RuvC to scan DNA until it finds its consensus sequence, where it cleaves and resolves cruciform DNA. This is Holliday junction branch migration complex subunit RuvB from Methanoregula boonei (strain DSM 21154 / JCM 14090 / 6A8).